Reading from the N-terminus, the 381-residue chain is 1-deoxy-D-xylulose 5-phosphate reductoisomerase (381 aa).

Thr-10, Gly-11, Ser-12, Ile-13, and Asn-120 together coordinate NADPH. Lys-121 is a 1-deoxy-D-xylulose 5-phosphate binding site. Glu-122 contacts NADPH. Asp-146 lines the Mn(2+) pocket. 1-deoxy-D-xylulose 5-phosphate contacts are provided by Ser-147, Glu-148, Ser-172, and His-195. Glu-148 contacts Mn(2+). Gly-201 lines the NADPH pocket. Positions 208, 213, 214, and 217 each coordinate 1-deoxy-D-xylulose 5-phosphate. Residue Glu-217 participates in Mn(2+) binding.

This sequence belongs to the DXR family. Mg(2+) is required as a cofactor. The cofactor is Mn(2+).

The catalysed reaction is 2-C-methyl-D-erythritol 4-phosphate + NADP(+) = 1-deoxy-D-xylulose 5-phosphate + NADPH + H(+). It participates in isoprenoid biosynthesis; isopentenyl diphosphate biosynthesis via DXP pathway; isopentenyl diphosphate from 1-deoxy-D-xylulose 5-phosphate: step 1/6. Functionally, catalyzes the NADPH-dependent rearrangement and reduction of 1-deoxy-D-xylulose-5-phosphate (DXP) to 2-C-methyl-D-erythritol 4-phosphate (MEP). This chain is 1-deoxy-D-xylulose 5-phosphate reductoisomerase, found in Thermodesulfovibrio yellowstonii (strain ATCC 51303 / DSM 11347 / YP87).